The chain runs to 208 residues: Small ribosomal subunit protein uS4 (208 aa).

The S4 RNA-binding domain occupies 97–160; the sequence is TRLDNVCYRM…QKQLRVQEAL (64 aa).

The protein belongs to the universal ribosomal protein uS4 family. Part of the 30S ribosomal subunit. Contacts protein S5. The interaction surface between S4 and S5 is involved in control of translational fidelity.

One of the primary rRNA binding proteins, it binds directly to 16S rRNA where it nucleates assembly of the body of the 30S subunit. Its function is as follows. With S5 and S12 plays an important role in translational accuracy. The chain is Small ribosomal subunit protein uS4 from Xanthomonas oryzae pv. oryzae (strain MAFF 311018).